Here is a 105-residue protein sequence, read N- to C-terminus: Nucleoid-associated protein Dred_0043 (105 aa).

Belongs to the YbaB/EbfC family. As to quaternary structure, homodimer.

It is found in the cytoplasm. The protein resides in the nucleoid. Its function is as follows. Binds to DNA and alters its conformation. May be involved in regulation of gene expression, nucleoid organization and DNA protection. This is Nucleoid-associated protein Dred_0043 from Desulforamulus reducens (strain ATCC BAA-1160 / DSM 100696 / MI-1) (Desulfotomaculum reducens).